The following is a 136-amino-acid chain: Translation initiation factor 5A (136 aa).

Lys38 carries the hypusine modification.

Belongs to the eIF-5A family.

The protein localises to the cytoplasm. Functionally, functions by promoting the formation of the first peptide bond. The sequence is that of Translation initiation factor 5A from Methanopyrus kandleri (strain AV19 / DSM 6324 / JCM 9639 / NBRC 100938).